The chain runs to 230 residues: MESGIPTYREKQTGFWACHNPERLETAKAFRENPSLVWGWYLWRRQQFSKAQPNAAHLALREMAGSMGTVSIITQNIDDLHERAGSVDVLHLHGSLSKPKCFACHRPGMVRNESAIMEEGALIEPPRCTRCNGKLRPGVVWYGEDLLPDVWKSALSLVKSCDVLISVGTSGIVTPAADLPNIALACGATVIHVNTVDVGMGAPNEIMLIGRATQILSHLSAFLSRELNSP.

The Deacetylase sirtuin-type domain maps to 1 to 226; sequence MESGIPTYRE…SHLSAFLSRE (226 aa). Substrate is bound by residues tyrosine 41 and arginine 44. NAD(+) is bound at residue 75 to 78; the sequence is QNID. Catalysis depends on histidine 93, which acts as the Proton acceptor. Residues cysteine 101, cysteine 104, cysteine 128, and cysteine 131 each coordinate Zn(2+). NAD(+)-binding positions include 168–170, 194–196, and alanine 212; these read GTS and NTV.

It belongs to the sirtuin family. Class III subfamily. Requires Zn(2+) as cofactor.

The protein resides in the cytoplasm. The catalysed reaction is N(6)-acetyl-L-lysyl-[protein] + NAD(+) + H2O = 2''-O-acetyl-ADP-D-ribose + nicotinamide + L-lysyl-[protein]. It catalyses the reaction N(6)-succinyl-L-lysyl-[protein] + NAD(+) + H2O = 2''-O-succinyl-ADP-D-ribose + nicotinamide + L-lysyl-[protein]. Its function is as follows. NAD-dependent lysine deacetylase and desuccinylase that specifically removes acetyl and succinyl groups on target proteins. Modulates the activities of several proteins which are inactive in their acylated form. The polypeptide is NAD-dependent protein deacylase 1 (Pseudomonas syringae pv. tomato (strain ATCC BAA-871 / DC3000)).